A 187-amino-acid polypeptide reads, in one-letter code: UPF0301 protein ETA_28320 (187 aa).

This sequence belongs to the UPF0301 (AlgH) family.

This is UPF0301 protein ETA_28320 from Erwinia tasmaniensis (strain DSM 17950 / CFBP 7177 / CIP 109463 / NCPPB 4357 / Et1/99).